Reading from the N-terminus, the 864-residue chain is Translation initiation factor IF-2 (864 aa).

Residues 140–171 are compositionally biased toward basic and acidic residues; the sequence is DSRSLNTKKENKLKISNKDEQNKKFNQHRESN. Residues 140 to 179 form a disordered region; it reads DSRSLNTKKENKLKISNKDEQNKKFNQHRESNSFDLNHKK. The tr-type G domain occupies 364 to 533; sequence IRAPVVTIMG…LLQAEMLELK (170 aa). Positions 373–380 are G1; that stretch reads GHVDHGKT. 373-380 contributes to the GTP binding site; it reads GHVDHGKT. Positions 398–402 are G2; sequence GITQN. A G3 region spans residues 419-422; the sequence is DTPG. GTP contacts are provided by residues 419–423 and 473–476; these read DTPGH and NKID. A G4 region spans residues 473 to 476; the sequence is NKID. A G5 region spans residues 509 to 511; the sequence is SAK.

This sequence belongs to the TRAFAC class translation factor GTPase superfamily. Classic translation factor GTPase family. IF-2 subfamily.

The protein localises to the cytoplasm. Functionally, one of the essential components for the initiation of protein synthesis. Protects formylmethionyl-tRNA from spontaneous hydrolysis and promotes its binding to the 30S ribosomal subunits. Also involved in the hydrolysis of GTP during the formation of the 70S ribosomal complex. The protein is Translation initiation factor IF-2 of Buchnera aphidicola subsp. Acyrthosiphon pisum (strain 5A).